The primary structure comprises 332 residues: L-lactate dehydrogenase A chain (332 aa).

NAD(+)-binding positions include 29 to 57 (GAVGMACAISILMKDLADELALVDVVEDK) and arginine 99. Substrate contacts are provided by arginine 106, asparagine 138, and arginine 169. Asparagine 138 is an NAD(+) binding site. The Proton acceptor role is filled by histidine 193. Threonine 248 is a binding site for substrate.

The protein belongs to the LDH/MDH superfamily. LDH family. In terms of assembly, homotetramer.

It localises to the cytoplasm. The enzyme catalyses (S)-lactate + NAD(+) = pyruvate + NADH + H(+). It participates in fermentation; pyruvate fermentation to lactate; (S)-lactate from pyruvate: step 1/1. In terms of biological role, interconverts simultaneously and stereospecifically pyruvate and lactate with concomitant interconversion of NADH and NAD(+). This chain is L-lactate dehydrogenase A chain (LDHA), found in Columba livia (Rock dove).